Here is a 384-residue protein sequence, read N- to C-terminus: MSVRTYRDISRRVSRKIRVGSVFVGGDAPVSVQTMTNTLTTDVAATVAQIRRAQEAGADIVRVSCPDEESTAALKAIISQVEVPIVADIHFHYKRAIEAAEAGAACLRINPGNIGSAERVREVVRAAKDHGCSMRIGVNAGSLEKELLEKYGEPCPEAMVESALSHARILEDNDFTEFKISVKASDAFLAVAAYKALAEACDYPLHLGITEAGGLRGGTVKSAIGIGSMLWAGIGDTIRVSLSAQPEEEVKVGFEILKSLNLRHRGVRVVSCPSCARQGFDVIKTVEVLESRLSHIQTPITLSIIGCVVNGPGEARETDIGLTGGGNLAKEGALNKVYVSGIPDHTINNEAMVDHLVALVEKKAAEIEALEAARKAKEPATAAE.

4 residues coordinate [4Fe-4S] cluster: cysteine 272, cysteine 275, cysteine 307, and glutamate 314.

The protein belongs to the IspG family. [4Fe-4S] cluster is required as a cofactor.

It catalyses the reaction (2E)-4-hydroxy-3-methylbut-2-enyl diphosphate + oxidized [flavodoxin] + H2O + 2 H(+) = 2-C-methyl-D-erythritol 2,4-cyclic diphosphate + reduced [flavodoxin]. It functions in the pathway isoprenoid biosynthesis; isopentenyl diphosphate biosynthesis via DXP pathway; isopentenyl diphosphate from 1-deoxy-D-xylulose 5-phosphate: step 5/6. Converts 2C-methyl-D-erythritol 2,4-cyclodiphosphate (ME-2,4cPP) into 1-hydroxy-2-methyl-2-(E)-butenyl 4-diphosphate. The polypeptide is 4-hydroxy-3-methylbut-2-en-1-yl diphosphate synthase (flavodoxin) (Rhodospirillum rubrum (strain ATCC 11170 / ATH 1.1.1 / DSM 467 / LMG 4362 / NCIMB 8255 / S1)).